The primary structure comprises 533 residues: Glucose-6-phosphate exchanger SLC37A1 (533 aa).

A helical membrane pass occupies residues 18 to 38; it reads QWYRAFIFILTFLLYASFHLS. A glycan (N-linked (GlcNAc...) asparagine) is linked at Asn-81. 4 consecutive transmembrane segments (helical) span residues 100–120, 129–149, 157–177, and 222–242; these read GALD…SGII, YLTF…LGYF, FYVV…PSVV, and SFVV…LFLI. Asn-263 is a glycosylation site (N-linked (GlcNAc...) asparagine). 7 consecutive transmembrane segments (helical) span residues 304-324, 334-354, 366-386, 394-414, 423-443, 466-486, and 490-510; these read VVIL…TGAL, LCLL…PLYI, GELS…AGVI, ASTC…FSTV, IAML…ITTA, AIID…AGLL, and GWSN…LFLI.

The protein belongs to the major facilitator superfamily. Organophosphate:Pi antiporter (OPA) (TC 2.A.1.4) family. In terms of tissue distribution, expressed in numerous tissues, with highest expression in pancreas, kidney, bone marrow, spleen, liver, small intestine, as well as in fetal brain, liver and spleen.

Its subcellular location is the endoplasmic reticulum membrane. The catalysed reaction is D-glucose 6-phosphate(in) + phosphate(out) = D-glucose 6-phosphate(out) + phosphate(in). With respect to regulation, inhibited by vanadate but not by chlorogenic acid. Functionally, inorganic phosphate and glucose-6-phosphate antiporter. May transport cytoplasmic glucose-6-phosphate into the lumen of the endoplasmic reticulum and translocate inorganic phosphate into the opposite direction. Independent of a lumenal glucose-6-phosphatase. May not play a role in homeostatic regulation of blood glucose levels. The protein is Glucose-6-phosphate exchanger SLC37A1 of Homo sapiens (Human).